The chain runs to 402 residues: S-adenosylmethionine synthase (402 aa).

137–142 (GQGSAD) contacts ATP.

This sequence belongs to the AdoMet synthase 2 family. It depends on Mg(2+) as a cofactor.

The enzyme catalyses L-methionine + ATP + H2O = S-adenosyl-L-methionine + phosphate + diphosphate. The protein operates within amino-acid biosynthesis; S-adenosyl-L-methionine biosynthesis; S-adenosyl-L-methionine from L-methionine: step 1/1. Functionally, catalyzes the formation of S-adenosylmethionine from methionine and ATP. The polypeptide is S-adenosylmethionine synthase (Pyrobaculum neutrophilum (strain DSM 2338 / JCM 9278 / NBRC 100436 / V24Sta) (Thermoproteus neutrophilus)).